Reading from the N-terminus, the 322-residue chain is Probable heme-iron transport system permease protein IsdF (322 aa).

The next 9 membrane-spanning stretches (helical) occupy residues 9–29 (LLFL…FVTG), 61–81 (ILIA…LQAA), 89–109 (ANII…MLFI), 114–134 (FYLP…IILL), 143–163 (VSMI…LEIL), 179–199 (IWSD…LTLL), 233–253 (VFLA…GIIV), 267–287 (VLIP…DLLG), and 294–314 (LEIP…IYLI).

This sequence belongs to the binding-protein-dependent transport system permease family. FecCD subfamily.

Its subcellular location is the cell membrane. Its function is as follows. Part of the binding-protein-dependent transport system for heme-iron. Responsible for the translocation of the substrate across the membrane. In Staphylococcus aureus (strain Mu3 / ATCC 700698), this protein is Probable heme-iron transport system permease protein IsdF (isdF).